The chain runs to 642 residues: Threonine--tRNA ligase (642 aa).

The TGS domain maps to 1–61 (MPVIRFYDGS…REDAFIEFVD (61 aa)). Residues 243 to 534 (DHRKIGKFLQ…LIEECSGNLP (292 aa)) form a catalytic region. Zn(2+)-binding residues include C334, H385, and H511.

The protein belongs to the class-II aminoacyl-tRNA synthetase family. As to quaternary structure, homodimer. It depends on Zn(2+) as a cofactor.

The protein localises to the cytoplasm. The catalysed reaction is tRNA(Thr) + L-threonine + ATP = L-threonyl-tRNA(Thr) + AMP + diphosphate + H(+). Functionally, catalyzes the attachment of threonine to tRNA(Thr) in a two-step reaction: L-threonine is first activated by ATP to form Thr-AMP and then transferred to the acceptor end of tRNA(Thr). Also edits incorrectly charged L-seryl-tRNA(Thr). The chain is Threonine--tRNA ligase from Buchnera aphidicola subsp. Acyrthosiphon pisum (strain Tuc7).